We begin with the raw amino-acid sequence, 350 residues long: 4-hydroxy-3-methylbut-2-enyl diphosphate reductase (350 aa).

Cys-36 is a [4Fe-4S] cluster binding site. The (2E)-4-hydroxy-3-methylbut-2-enyl diphosphate site is built by His-65 and His-101. His-65 and His-101 together coordinate dimethylallyl diphosphate. Positions 65 and 101 each coordinate isopentenyl diphosphate. Cys-123 contacts [4Fe-4S] cluster. His-151 lines the (2E)-4-hydroxy-3-methylbut-2-enyl diphosphate pocket. His-151 lines the dimethylallyl diphosphate pocket. His-151 serves as a coordination point for isopentenyl diphosphate. Glu-153 functions as the Proton donor in the catalytic mechanism. Thr-192 contributes to the (2E)-4-hydroxy-3-methylbut-2-enyl diphosphate binding site. Position 222 (Cys-222) interacts with [4Fe-4S] cluster. Residues Ser-250, Ser-251, Asn-252, and Ser-295 each contribute to the (2E)-4-hydroxy-3-methylbut-2-enyl diphosphate site. Residues Ser-250, Ser-251, Asn-252, and Ser-295 each contribute to the dimethylallyl diphosphate site. The isopentenyl diphosphate site is built by Ser-250, Ser-251, Asn-252, and Ser-295.

Belongs to the IspH family. Requires [4Fe-4S] cluster as cofactor.

It catalyses the reaction isopentenyl diphosphate + 2 oxidized [2Fe-2S]-[ferredoxin] + H2O = (2E)-4-hydroxy-3-methylbut-2-enyl diphosphate + 2 reduced [2Fe-2S]-[ferredoxin] + 2 H(+). The catalysed reaction is dimethylallyl diphosphate + 2 oxidized [2Fe-2S]-[ferredoxin] + H2O = (2E)-4-hydroxy-3-methylbut-2-enyl diphosphate + 2 reduced [2Fe-2S]-[ferredoxin] + 2 H(+). The protein operates within isoprenoid biosynthesis; dimethylallyl diphosphate biosynthesis; dimethylallyl diphosphate from (2E)-4-hydroxy-3-methylbutenyl diphosphate: step 1/1. It functions in the pathway isoprenoid biosynthesis; isopentenyl diphosphate biosynthesis via DXP pathway; isopentenyl diphosphate from 1-deoxy-D-xylulose 5-phosphate: step 6/6. Functionally, catalyzes the conversion of 1-hydroxy-2-methyl-2-(E)-butenyl 4-diphosphate (HMBPP) into a mixture of isopentenyl diphosphate (IPP) and dimethylallyl diphosphate (DMAPP). Acts in the terminal step of the DOXP/MEP pathway for isoprenoid precursor biosynthesis. This Rhizobium meliloti (strain 1021) (Ensifer meliloti) protein is 4-hydroxy-3-methylbut-2-enyl diphosphate reductase.